The sequence spans 126 residues: Membrane-anchored ubiquitin-fold protein 2 (126 aa).

The Ubiquitin-like domain maps to 14–79 (VEVRFRLDDG…VLENNRTLAE (66 aa)). C123 carries the post-translational modification Cysteine methyl ester. Residue C123 is the site of S-geranylgeranyl cysteine attachment. Residues 124–126 (TIL) constitute a propeptide, removed in mature form.

The protein localises to the cell membrane. Its function is as follows. May serve as docking site to facilitate the association of other proteins to the plasma membrane. The polypeptide is Membrane-anchored ubiquitin-fold protein 2 (MUB2) (Oryza sativa subsp. japonica (Rice)).